Reading from the N-terminus, the 206-residue chain is Outer-membrane lipoprotein LolB (206 aa).

The N-terminal stretch at 1 to 18 is a signal peptide; the sequence is MSLLKNLLAPCLALLLAG. Cysteine 19 is lipidated: N-palmitoyl cysteine. The S-diacylglycerol cysteine moiety is linked to residue cysteine 19.

This sequence belongs to the LolB family. In terms of assembly, monomer.

The protein resides in the cell outer membrane. Functionally, plays a critical role in the incorporation of lipoproteins in the outer membrane after they are released by the LolA protein. The chain is Outer-membrane lipoprotein LolB from Stutzerimonas stutzeri (strain A1501) (Pseudomonas stutzeri).